A 110-amino-acid polypeptide reads, in one-letter code: UPF0060 membrane protein BPSL1340 (110 aa).

4 helical membrane-spanning segments follow: residues A9–L29, P34–L54, A64–V84, and L86–L106.

It belongs to the UPF0060 family.

It localises to the cell inner membrane. This chain is UPF0060 membrane protein BPSL1340, found in Burkholderia pseudomallei (strain K96243).